Here is a 94-residue protein sequence, read N- to C-terminus: Co-chaperonin GroES (94 aa).

Belongs to the GroES chaperonin family. As to quaternary structure, heptamer of 7 subunits arranged in a ring. Interacts with the chaperonin GroEL.

The protein resides in the cytoplasm. Together with the chaperonin GroEL, plays an essential role in assisting protein folding. The GroEL-GroES system forms a nano-cage that allows encapsulation of the non-native substrate proteins and provides a physical environment optimized to promote and accelerate protein folding. GroES binds to the apical surface of the GroEL ring, thereby capping the opening of the GroEL channel. The sequence is that of Co-chaperonin GroES from Ligilactobacillus salivarius (strain UCC118) (Lactobacillus salivarius).